The sequence spans 222 residues: UPF0758 protein Ppha_0935 (222 aa).

Residues 100-222 (KIQAARDVFE…CFSFRESGLL (123 aa)) enclose the MPN domain. His171, His173, and Asp184 together coordinate Zn(2+). The JAMM motif motif lies at 171–184 (HNHPSGDVEPSNAD).

This sequence belongs to the UPF0758 family.

This is UPF0758 protein Ppha_0935 from Pelodictyon phaeoclathratiforme (strain DSM 5477 / BU-1).